Reading from the N-terminus, the 200-residue chain is MPCPGAPCCSLVATGSRVPFSGLKEEEEEDGEDDEEEEEEGFFQKVLTPLLSWLLSRRLWLGPQCSKLPLPSCCRQPPPAGPPVEGDGWLKSFQRSRRMCFTSKSFRPEPDMLYAQKAKGWQLTQDSGGWEVQDQCTRIWSKENLLALNTHSRRQKGKRENKVCVSTWQKSRGDRTYSSMATTPSMTKILEGCMYRKLKC.

Positions 19–39 (PFSGLKEEEEEDGEDDEEEEE) are disordered. The segment covering 25-39 (EEEEEDGEDDEEEEE) has biased composition (acidic residues).

In terms of tissue distribution, expressed in brain. Expressed in muscle tissues (at protein level).

The protein resides in the cytoplasm. This is Putative protein ATXN8OS from Homo sapiens (Human).